We begin with the raw amino-acid sequence, 212 residues long: Large ribosomal subunit protein uL3 (212 aa).

The interval 130 to 158 (KRGSMTHGSKNHRLPGSTGAGTTPGRVYP) is disordered.

The protein belongs to the universal ribosomal protein uL3 family. Part of the 50S ribosomal subunit. Forms a cluster with proteins L14 and L19.

In terms of biological role, one of the primary rRNA binding proteins, it binds directly near the 3'-end of the 23S rRNA, where it nucleates assembly of the 50S subunit. The chain is Large ribosomal subunit protein uL3 from Gloeothece citriformis (strain PCC 7424) (Cyanothece sp. (strain PCC 7424)).